A 304-amino-acid chain; its full sequence is tRNA dimethylallyltransferase (304 aa).

13–20 (GPTAAGKT) contacts ATP. Residue 15 to 20 (TAAGKT) coordinates substrate. Residues 38 to 41 (DSRQ) form an interaction with substrate tRNA region.

Belongs to the IPP transferase family. As to quaternary structure, monomer. Mg(2+) is required as a cofactor.

The catalysed reaction is adenosine(37) in tRNA + dimethylallyl diphosphate = N(6)-dimethylallyladenosine(37) in tRNA + diphosphate. In terms of biological role, catalyzes the transfer of a dimethylallyl group onto the adenine at position 37 in tRNAs that read codons beginning with uridine, leading to the formation of N6-(dimethylallyl)adenosine (i(6)A). The protein is tRNA dimethylallyltransferase of Cytophaga hutchinsonii (strain ATCC 33406 / DSM 1761 / CIP 103989 / NBRC 15051 / NCIMB 9469 / D465).